The sequence spans 645 residues: Aminopeptidase P1 (645 aa).

Residue serine 2 is modified to N-acetylserine. The a peptide site is built by arginine 69 and histidine 420. Aspartate 440, aspartate 451, and histidine 514 together coordinate Mn(2+). 3 residues coordinate a peptide: histidine 514, histidine 523, and glutamate 549. Residues glutamate 549 and glutamate 563 each contribute to the Mn(2+) site.

It belongs to the peptidase M24B family. In terms of assembly, homodimer. Interacts with N-1-naphthylphthalamic acid (NPA). Requires Mn(2+) as cofactor. Zn(2+) serves as cofactor. Post-translationally, glycosylated. Also present in a non-glycosylated form. Ubiquitous with preferential expression in 5 days-old seedlings, roots, flowers, inflorescences and rosette leaves (at protein levels).

It is found in the cytoplasm. Its subcellular location is the cell membrane. The protein resides in the microsome membrane. The catalysed reaction is Release of any N-terminal amino acid, including proline, that is linked to proline, even from a dipeptide or tripeptide.. Its activity is regulated as follows. Inhibited by EGTA and apstatin, and, to some extent, by the flavonoid kaempferol. Its function is as follows. Catalyzes the removal of a penultimate prolyl residue from the N-termini of peptides, such as Arg-Pro-Pro. Aminopeptidase that binds to the auxin transport inhibitor N-1-naphthylphthalamic acid (NPA). May play a negative role in the regulation of PIN auxin transport proteins. The chain is Aminopeptidase P1 from Arabidopsis thaliana (Mouse-ear cress).